The chain runs to 158 residues: GTP-dependent dephospho-CoA kinase (158 aa).

GTP contacts are provided by aspartate 35, valine 36, aspartate 54, lysine 56, glutamate 109, and aspartate 132.

Belongs to the GTP-dependent DPCK family.

It carries out the reaction 3'-dephospho-CoA + GTP = GDP + CoA + H(+). It participates in cofactor biosynthesis; coenzyme A biosynthesis. Catalyzes the GTP-dependent phosphorylation of the 3'-hydroxyl group of dephosphocoenzyme A to form coenzyme A (CoA). The chain is GTP-dependent dephospho-CoA kinase from Methanococcus maripaludis (strain C5 / ATCC BAA-1333).